A 1164-amino-acid polypeptide reads, in one-letter code: Integrin alpha-5 (1164 aa).

A compositionally biased stretch (basic and acidic residues) spans 1 to 14; that stretch reads MREEGGGSREKEGE. The interval 1-119 is disordered; sequence MREEGGGSRE…MGSRTPGSPL (119 aa). Positions 81–90 are enriched in low complexity; the sequence is LLPALSHSPL. Residues 156–221 form an FG-GAP 1 repeat; that stretch reads NLDAEAPAVL…CPWGTSPAQC (66 aa). N197 carries an N-linked (GlcNAc...) asparagine glycan. Residues C212 and C221 are joined by a disulfide bond. The residue at position 240 (S240) is a Phosphoserine. 6 FG-GAP repeats span residues 241 to 301, 306 to 358, 372 to 424, 425 to 490, 491 to 550, and 554 to 617; these read SEGE…QILE, RSDF…AESY, QTRQ…GSDI, RSLY…GMEP, TPTL…GLAS, and QVLL…IFPA. The cysteines at positions 269 and 289 are disulfide-linked. An N-linked (GlcNAc...) asparagine glycan is attached at N295. Cysteines 305 and 318 form a disulfide. Residues Q375 and D382 each coordinate a protein. Ca(2+)-binding residues include E393, S395, D397, and D401. Residues N410, N420, and N429 are each glycosylated (N-linked (GlcNAc...) asparagine). Residues D447, N449, D451, L453, D455, D514, D516, D518, Y520, D522, D578, D580, N582, Y584, and D586 each contribute to the Ca(2+) site. Cysteines 626 and 635 form a disulfide. N-linked (GlcNAc...) asparagine glycans are attached at residues N637, N643, N706, and N722. C641 and C697 are disulfide-bonded. Residues C758 and C764 are joined by a disulfide bond. 5 N-linked (GlcNAc...) asparagine glycosylation sites follow: N788, N825, N837, N886, and N982. C831 and C844 form a disulfide bridge. 3 disulfides stabilise this stretch: C962/C1072, C983/C1036, and C1026/C1031. The tract at residues 983 to 1022 is disordered; sequence CTTSHPPNPEGLELDPEGSQHHRLQRRDVPGRSPASSGPQ. A helical membrane pass occupies residues 1114 to 1134; it reads LWIIILAILIGLLLLGLLIYI. At 1135-1164 the chain is on the cytoplasmic side; that stretch reads LYKLGFFKRSLPYGTAMEKAQLKPPATSDA. An interaction with HPS5 region spans residues 1136-1143; the sequence is YKLGFFKR. The short motif at 1139-1143 is the GFFKR motif element; sequence GFFKR.

This sequence belongs to the integrin alpha chain family. As to quaternary structure, heterodimer of an alpha and a beta subunit. The alpha subunit is composed of a heavy and a light chain linked by a disulfide bond. Alpha-5 associates with beta-1. Interacts with NISCH. Interacts with HPS5. Interacts with RAB21 and COMP. Interacts with CIB1. ITGA5:ITGB1 interacts with CCN3. ITGA5:ITGB1 interacts with FBN1. ITGA5:ITGB1 interacts with IL1B. ITGA5:ITGB1 interacts with ACE2. ITGA5:ITGB1 interacts with SELP. Interacts with ANGPT2. ITGA5:ITGB1 interacts with IGFBP2. ITGA5:ITGB1 interacts with IGFBP1. Post-translationally, proteolytic cleavage by PCSK5 mediates activation of the precursor.

The protein resides in the cell membrane. Its subcellular location is the cell junction. It is found in the focal adhesion. Integrin alpha-5/beta-1 (ITGA5:ITGB1) is a receptor for fibronectin and fibrinogen. It recognizes the sequence R-G-D in its ligands. ITGA5:ITGB1 binds to PLA2G2A via a site (site 2) which is distinct from the classical ligand-binding site (site 1) and this induces integrin conformational changes and enhanced ligand binding to site 1. ITGA5:ITGB1 acts as a receptor for fibrillin-1 (FBN1) and mediates R-G-D-dependent cell adhesion to FBN1. ITGA5:ITGB1 acts as a receptor for fibronectin (FN1) and mediates R-G-D-dependent cell adhesion to FN1. ITGA5:ITGB1 is a receptor for IL1B and binding is essential for IL1B signaling. ITGA5:ITGB3 is a receptor for soluble CD40LG and is required for CD40/CD40LG signaling. This is Integrin alpha-5 (ITGA5) from Bos taurus (Bovine).